We begin with the raw amino-acid sequence, 216 residues long: Orotate phosphoribosyltransferase (216 aa).

Residue Lys-30 participates in 5-phospho-alpha-D-ribose 1-diphosphate binding. Residue Phe-38–Phe-39 coordinates orotate. Residues Tyr-75 to Lys-76, Arg-102, Lys-103, Lys-106, His-108, and Asp-128 to Ala-136 each bind 5-phospho-alpha-D-ribose 1-diphosphate. Positions 132 and 160 each coordinate orotate.

This sequence belongs to the purine/pyrimidine phosphoribosyltransferase family. PyrE subfamily. In terms of assembly, homodimer. Mg(2+) serves as cofactor.

The enzyme catalyses orotidine 5'-phosphate + diphosphate = orotate + 5-phospho-alpha-D-ribose 1-diphosphate. The protein operates within pyrimidine metabolism; UMP biosynthesis via de novo pathway; UMP from orotate: step 1/2. In terms of biological role, catalyzes the transfer of a ribosyl phosphate group from 5-phosphoribose 1-diphosphate to orotate, leading to the formation of orotidine monophosphate (OMP). In Acinetobacter baumannii (strain AB307-0294), this protein is Orotate phosphoribosyltransferase.